A 347-amino-acid polypeptide reads, in one-letter code: Fructose-1,6-bisphosphatase class 1 (347 aa).

4 residues coordinate Mg(2+): glutamate 106, aspartate 128, isoleucine 130, and aspartate 131. Substrate is bound by residues 131-134 (DGSS), asparagine 223, tyrosine 251, and lysine 281. Glutamate 287 is a binding site for Mg(2+).

Belongs to the FBPase class 1 family. Homotetramer. The cofactor is Mg(2+).

It is found in the cytoplasm. It carries out the reaction beta-D-fructose 1,6-bisphosphate + H2O = beta-D-fructose 6-phosphate + phosphate. Its pathway is carbohydrate biosynthesis; Calvin cycle. The protein is Fructose-1,6-bisphosphatase class 1 of Synechocystis sp. (strain ATCC 27184 / PCC 6803 / Kazusa).